A 1377-amino-acid chain; its full sequence is DNA-directed RNA polymerase subunit beta (1377 aa).

Belongs to the RNA polymerase beta chain family. As to quaternary structure, the RNAP catalytic core consists of 2 alpha, 1 beta, 1 beta' and 1 omega subunit. When a sigma factor is associated with the core the holoenzyme is formed, which can initiate transcription.

The catalysed reaction is RNA(n) + a ribonucleoside 5'-triphosphate = RNA(n+1) + diphosphate. In terms of biological role, DNA-dependent RNA polymerase catalyzes the transcription of DNA into RNA using the four ribonucleoside triphosphates as substrates. The polypeptide is DNA-directed RNA polymerase subunit beta (Brucella abortus (strain S19)).